A 388-amino-acid polypeptide reads, in one-letter code: Trans-enoyl reductase tenC (388 aa).

51–54 (VDGK) contributes to the NADP(+) binding site. 142 to 149 (VGIASVGM) contributes to the substrate binding site. NADP(+) is bound by residues 219–222 (SSES), tyrosine 237, and 284–285 (LD). 304 to 308 (SFTQF) lines the substrate pocket. 373–374 (IK) provides a ligand contact to NADP(+).

It belongs to the zinc-containing alcohol dehydrogenase family. Monomer.

It participates in secondary metabolite biosynthesis. Functionally, trans-enoyl reductase; part of the gene cluster that mediates the biosynthesis of tenellin-type 2-pyridones, iron-chelating compounds involved in iron stress tolerance, competition with the natural competitor fungus Metarhizium robertsii and insect hosts infection. TenC collaborates with the hybrid PKS-NRPS synthetase tenS to catalyze the assembly of the polyketide-amino acid backbone, since tenS lacks a designated enoylreductase (ER) domain. Upon formation of the polyketide backbone on the thiotemplate of tenS, the triketide is transferred to the NRPS module and linked to tyrosine to produce the pyrrolidine-2-dione intermediates, including pretellinin A, 11-hydropretellenin A, 12-hydropretellenin A, 13-hydropretellenin A, 14-hydropretellenin A, 12-oxopretellenin A and prototellinin D. The pathway begins with the assembly of the polyketide-amino acid backbone by the hybrid PKS-NRPS tenS with the help of the enoyl reductase tenC. These enzymes catalyze the synthesis of the pyrrolidine-2-dione intermediates pretellinin A, 11-hydropretellenin A, 12-hydropretellenin A, 13-hydropretellenin A, 14-hydropretellenin A, 12-oxopretellenin A and prototellinin D. The cytochrome P450 monooxygenase tenA then catalyzes an oxidative ring expansion of pretenellin A and 14-hydropretellenin A to form the 2-pyridone core, leading to pretenellin B and pyridovericin, respectively. The cytochrome P450 monooxygenase tenB is then required for the selective N-hydroxylation of the 2-pyridone nitrogen of yield tellinin and 15-hydroxytellenin (15-HT), respectively. The UDP-glucosyltransferase GT1 and the methyltransferase MT1, located outside the tenS gene cluster, contribute to the stepwise glycosylation and methylation of 15-HT to obtain the glycoside pyridovericin-N-O-(4-O-methyl-beta-D-glucopyranoside) (PMGP). Additional related compounds such as 1-O-methyl-15-HT, (8Z)-1-O-methyl-15-HT, and O-methyltenellin A are also produced but the enzymes involved in their biosynthesis have still to be determined. This chain is Trans-enoyl reductase tenC, found in Beauveria bassiana (strain ARSEF 2860) (White muscardine disease fungus).